The following is a 632-amino-acid chain: MAU2 chromatid cohesion factor homolog (632 aa).

2 TPR repeats span residues 453–486 (GGFY…ANAE) and 493–526 (SCSL…ASKI).

This sequence belongs to the SCC4/mau-2 family. As to quaternary structure, interacts with Nipped-B to form the cohesin loading complex.

The protein resides in the nucleus. Its subcellular location is the nucleoplasm. Required for association of the cohesin complex with chromatin during interphase. Plays a role in sister chromatid cohesion and normal progression through prometaphase. The protein is MAU2 chromatid cohesion factor homolog of Drosophila sechellia (Fruit fly).